Consider the following 153-residue polypeptide: Endoribonuclease YbeY (153 aa).

His118, His122, and His128 together coordinate Zn(2+).

Belongs to the endoribonuclease YbeY family. The cofactor is Zn(2+).

It is found in the cytoplasm. Single strand-specific metallo-endoribonuclease involved in late-stage 70S ribosome quality control and in maturation of the 3' terminus of the 16S rRNA. The protein is Endoribonuclease YbeY of Pelagibacter ubique (strain HTCC1062).